A 219-amino-acid chain; its full sequence is ATP-dependent dethiobiotin synthetase BioD (219 aa).

12–17 serves as a coordination point for ATP; it reads EVGKTY. A Mg(2+)-binding site is contributed by threonine 16. The active site involves lysine 37. Serine 41 contacts substrate. ATP contacts are provided by residues aspartate 52, 114–117, and 174–175; these read EGAG and NC. 2 residues coordinate Mg(2+): aspartate 52 and glutamate 114.

This sequence belongs to the dethiobiotin synthetase family. As to quaternary structure, homodimer. Requires Mg(2+) as cofactor.

It localises to the cytoplasm. The catalysed reaction is (7R,8S)-7,8-diammoniononanoate + CO2 + ATP = (4R,5S)-dethiobiotin + ADP + phosphate + 3 H(+). Its pathway is cofactor biosynthesis; biotin biosynthesis; biotin from 7,8-diaminononanoate: step 1/2. Its function is as follows. Catalyzes a mechanistically unusual reaction, the ATP-dependent insertion of CO2 between the N7 and N8 nitrogen atoms of 7,8-diaminopelargonic acid (DAPA, also called 7,8-diammoniononanoate) to form a ureido ring. The sequence is that of ATP-dependent dethiobiotin synthetase BioD from Francisella tularensis subsp. holarctica (strain FTNF002-00 / FTA).